The primary structure comprises 306 residues: Ribosomal RNA small subunit methyltransferase H (306 aa).

S-adenosyl-L-methionine is bound by residues 33–35, Asp-51, Phe-78, Asp-96, and Gln-103; that span reads GGY.

This sequence belongs to the methyltransferase superfamily. RsmH family.

It localises to the cytoplasm. The catalysed reaction is cytidine(1402) in 16S rRNA + S-adenosyl-L-methionine = N(4)-methylcytidine(1402) in 16S rRNA + S-adenosyl-L-homocysteine + H(+). Functionally, specifically methylates the N4 position of cytidine in position 1402 (C1402) of 16S rRNA. The chain is Ribosomal RNA small subunit methyltransferase H from Rickettsia felis (strain ATCC VR-1525 / URRWXCal2) (Rickettsia azadi).